The primary structure comprises 360 residues: C-X-C chemokine receptor type 2 (360 aa).

Topologically, residues M1 to K48 are extracellular. Residues N10 and N24 are each glycosylated (N-linked (GlcNAc...) asparagine). Residues Y49–Y75 traverse the membrane as a helical segment. Topologically, residues S76–D84 are cytoplasmic. Residues V85–T105 form a helical membrane-spanning segment. Residues A106 to K120 are Extracellular-facing. An intrachain disulfide couples C119 to C196. Residues V121–M142 form a helical membrane-spanning segment. Residues D143–K163 are Cytoplasmic-facing. Residues F164 to F183 traverse the membrane as a helical segment. Over R184–R208 the chain is Extracellular. The chain crosses the membrane as a helical span at residues M209–Y231. Residues G232–R251 lie on the Cytoplasmic side of the membrane. The helical transmembrane segment at V252–A273 threads the bilayer. Topologically, residues D274–R294 are extracellular. The helical transmembrane segment at A295–V315 threads the bilayer. At F316–L360 the chain is on the cytoplasmic side.

This sequence belongs to the G-protein coupled receptor 1 family. Interacts with IL8. Interacts with GNAI2. In terms of processing, phosphorylated upon ligand binding; which is required for desensitization.

Its subcellular location is the cell membrane. Functionally, receptor for interleukin-8 which is a powerful neutrophil chemotactic factor. Binding of IL-8 to the receptor causes activation of neutrophils. This response is mediated via a G-protein that activates a phosphatidylinositol-calcium second messenger system. Binds to IL-8 with high affinity. Also binds with high affinity to CXCL3, GRO/MGSA and NAP-2. The protein is C-X-C chemokine receptor type 2 (CXCR2) of Bos taurus (Bovine).